A 199-amino-acid chain; its full sequence is Protein-methionine-sulfoxide reductase heme-binding subunit MsrQ (199 aa).

The next 4 helical transmembrane spans lie at 8-28 (IIWL…WLFW), 82-102 (LWCF…ELGI), 116-136 (PYLT…LTST), and 153-173 (VVYL…KVLS).

The protein belongs to the MsrQ family. Heterodimer of a catalytic subunit (MsrP) and a heme-binding subunit (MsrQ). The cofactor is FMN. It depends on heme b as a cofactor.

It localises to the cell inner membrane. In terms of biological role, part of the MsrPQ system that repairs oxidized periplasmic proteins containing methionine sulfoxide residues (Met-O), using respiratory chain electrons. Thus protects these proteins from oxidative-stress damage caused by reactive species of oxygen and chlorine generated by the host defense mechanisms. MsrPQ is essential for the maintenance of envelope integrity under bleach stress, rescuing a wide series of structurally unrelated periplasmic proteins from methionine oxidation, including the primary periplasmic chaperone SurA and the lipoprotein Pal. MsrQ provides electrons for reduction to the reductase catalytic subunit MsrP, using the quinone pool of the respiratory chain. This chain is Protein-methionine-sulfoxide reductase heme-binding subunit MsrQ, found in Salmonella arizonae (strain ATCC BAA-731 / CDC346-86 / RSK2980).